We begin with the raw amino-acid sequence, 149 residues long: CyanoQ (149 aa).

The N-terminal stretch at 1–21 (MSRLRSLLSLILVLVTTVLVS) is a signal peptide. The N-palmitoyl cysteine moiety is linked to residue C22. C22 is lipidated: S-diacylglycerol cysteine.

Belongs to the PsbQ family. CyanoQ subfamily. PSII is composed of 1 copy each of membrane proteins PsbA, PsbB, PsbC, PsbD, PsbE, PsbF, PsbH, PsbI, PsbJ, PsbK, PsbL, PsbM, PsbT, PsbX, PsbY, PsbZ, Psb30/Ycf12, peripheral proteins PsbO, CyanoQ (PsbQ), PsbU, PsbV and a large number of cofactors. It forms dimeric complexes. Pull-down experiments with His-tagged PsbQ pull down dimeric, but not monomeric, PSII. Post-translationally, the N-terminus is blocked. Upon expression in E.coli the N-terminus is modified with a diacylglycerol and an acyl group bound to two palmitates and one palmitoleate.

Its subcellular location is the cellular thylakoid membrane. In terms of biological role, one of the extrinsic, lumenal subunits of photosystem II (PSII), which stabilize and protect the oxygen-evolving complex. PSII is a light-driven water plastoquinone oxidoreductase, using light energy to abstract electrons from H(2)O, generating a proton gradient subsequently used for ATP formation. Plays a role in the stability of the oxygen-evolving center on the luminal side of PSII. Required for optimal photoautotrophic growth in the absence of Ca(2+) or Cl(-), functions in optimizing PSII water oxidation/O(2) evolving activity. Requires PsbO to bind to PSII. This is CyanoQ from Synechocystis sp. (strain ATCC 27184 / PCC 6803 / Kazusa).